Reading from the N-terminus, the 394-residue chain is Flavohemoprotein (394 aa).

The Globin domain maps to 1 to 136 (MISQQTIDIV…LANVFITREE (136 aa)). H85 provides a ligand contact to heme b. Active-site charge relay system residues include Y95 and E135. A reductase region spans residues 147–394 (GGWRGTREFT…YECFGPHKVL (248 aa)). Residues 150-255 (RGTREFTLIE…AAPAGDFFLD (106 aa)) enclose the FAD-binding FR-type domain. Residues Y188 and 204–207 (RQYS) each bind FAD. NADP(+) is bound at residue 268–273 (GVGLTP). 387 to 390 (CFGP) serves as a coordination point for FAD.

This sequence belongs to the globin family. Two-domain flavohemoproteins subfamily. In the C-terminal section; belongs to the flavoprotein pyridine nucleotide cytochrome reductase family. Heme b serves as cofactor. It depends on FAD as a cofactor.

The enzyme catalyses 2 nitric oxide + NADPH + 2 O2 = 2 nitrate + NADP(+) + H(+). It catalyses the reaction 2 nitric oxide + NADH + 2 O2 = 2 nitrate + NAD(+) + H(+). Functionally, is involved in NO detoxification in an aerobic process, termed nitric oxide dioxygenase (NOD) reaction that utilizes O(2) and NAD(P)H to convert NO to nitrate, which protects the bacterium from various noxious nitrogen compounds. Therefore, plays a central role in the inducible response to nitrosative stress. The sequence is that of Flavohemoprotein from Photobacterium profundum (strain SS9).